Reading from the N-terminus, the 537-residue chain is NAD(P)H-quinone oxidoreductase chain 4 3 (537 aa).

Helical transmembrane passes span 6–26 (FPWL…IPII), 36–56 (WYGL…FWHY), 87–107 (LSMP…FAAW), 115–135 (LFYG…VAQD), 136–156 (LLLF…LISI), 169–189 (FILY…ALAF), 209–229 (AIEL…LPIF), 243–263 (SAPG…YALI), 277–297 (FAPV…CCAF), 314–334 (MGFV…GAVL), 335–355 (QMVS…VTYE), 387–407 (LALP…GIAT), and 417–437 (VVVV…LLSL).

Belongs to the complex I subunit 4 family.

The protein localises to the cellular thylakoid membrane. It catalyses the reaction a plastoquinone + NADH + (n+1) H(+)(in) = a plastoquinol + NAD(+) + n H(+)(out). The enzyme catalyses a plastoquinone + NADPH + (n+1) H(+)(in) = a plastoquinol + NADP(+) + n H(+)(out). NDH-1 shuttles electrons from NAD(P)H, via FMN and iron-sulfur (Fe-S) centers, to quinones in the respiratory chain. The immediate electron acceptor for the enzyme in this species is believed to be plastoquinone. Couples the redox reaction to proton translocation (for every two electrons transferred, four hydrogen ions are translocated across the cytoplasmic membrane), and thus conserves the redox energy in a proton gradient. The sequence is that of NAD(P)H-quinone oxidoreductase chain 4 3 from Trichormus variabilis (strain ATCC 29413 / PCC 7937) (Anabaena variabilis).